Reading from the N-terminus, the 316-residue chain is Glucan endo-1,3-beta-glucosidase GV (316 aa).

Glu-99 (proton donor) is an active-site residue. Glu-239 functions as the Nucleophile in the catalytic mechanism.

The protein belongs to the glycosyl hydrolase 17 family.

It localises to the cytoplasm. The enzyme catalyses Hydrolysis of (1-&gt;3)-beta-D-glucosidic linkages in (1-&gt;3)-beta-D-glucans.. Functionally, may provide a degree of protection against microbial invasion of germinated barley grain through its ability to degrade fungal cell wall polysaccharides. This is Glucan endo-1,3-beta-glucosidase GV from Hordeum vulgare (Barley).